A 92-amino-acid polypeptide reads, in one-letter code: UPF0235 protein PF1765 (92 aa).

Belongs to the UPF0235 family.

This is UPF0235 protein PF1765 from Pyrococcus furiosus (strain ATCC 43587 / DSM 3638 / JCM 8422 / Vc1).